The primary structure comprises 678 residues: Zinc finger translocation-associated protein (678 aa).

Disordered regions lie at residues 1–100 (MEPG…PGRD), 182–250 (LGVQ…GSRG), 329–417 (QPEA…HRRH), and 490–583 (LGPP…NYQP). Low complexity predominate over residues 62–78 (SAPLPSSRARGPASSGR). Basic and acidic residues predominate over residues 79-88 (KYSDHCEARA). A compositionally biased stretch (acidic residues) spans 187 to 201 (AEEEEEEEEEEEEEG). K375 participates in a covalent cross-link: Glycyl lysine isopeptide (Lys-Gly) (interchain with G-Cter in SUMO2). The span at 388 to 398 (AEEEEELEEGE) shows a compositional bias: acidic residues. The segment covering 492–504 (PPRPESPQGPIPP) has biased composition (pro residues). 2 stretches are compositionally biased toward acidic residues: residues 513 to 529 (GGGD…EEWG) and 543 to 553 (AEEEEDEEDGQ). The span at 560 to 572 (LPPPPPPPPPPPP) shows a compositional bias: pro residues. Positions 573 to 583 (RSREQRRNYQP) are enriched in basic and acidic residues.

The polypeptide is Zinc finger translocation-associated protein (Homo sapiens (Human)).